We begin with the raw amino-acid sequence, 373 residues long: NAD(P)H-quinone oxidoreductase subunit 1 (373 aa).

A run of 8 helical transmembrane segments spans residues 28–48 (LLWL…GVLV), 98–118 (LLFT…WLII), 129–149 (VGVG…GLLM), 167–187 (AAQS…IVMM), 205–225 (ILSW…ICAL), 267–287 (VLSA…PIPV), 309–329 (SVGI…AILL), and 348–368 (FLLP…LAFP).

The protein belongs to the complex I subunit 1 family. In terms of assembly, NDH-1 is composed of at least 11 different subunits.

The protein resides in the cellular thylakoid membrane. The enzyme catalyses a plastoquinone + NADH + (n+1) H(+)(in) = a plastoquinol + NAD(+) + n H(+)(out). It carries out the reaction a plastoquinone + NADPH + (n+1) H(+)(in) = a plastoquinol + NADP(+) + n H(+)(out). Functionally, NDH-1 shuttles electrons from an unknown electron donor, via FMN and iron-sulfur (Fe-S) centers, to quinones in the respiratory and/or the photosynthetic chain. The immediate electron acceptor for the enzyme in this species is believed to be plastoquinone. Couples the redox reaction to proton translocation, and thus conserves the redox energy in a proton gradient. In Parasynechococcus marenigrum (strain WH8102), this protein is NAD(P)H-quinone oxidoreductase subunit 1.